Here is a 95-residue protein sequence, read N- to C-terminus: Aspartyl/glutamyl-tRNA(Asn/Gln) amidotransferase subunit C (95 aa).

It belongs to the GatC family. Heterotrimer of A, B and C subunits.

It catalyses the reaction L-glutamyl-tRNA(Gln) + L-glutamine + ATP + H2O = L-glutaminyl-tRNA(Gln) + L-glutamate + ADP + phosphate + H(+). The enzyme catalyses L-aspartyl-tRNA(Asn) + L-glutamine + ATP + H2O = L-asparaginyl-tRNA(Asn) + L-glutamate + ADP + phosphate + 2 H(+). Its function is as follows. Allows the formation of correctly charged Asn-tRNA(Asn) or Gln-tRNA(Gln) through the transamidation of misacylated Asp-tRNA(Asn) or Glu-tRNA(Gln) in organisms which lack either or both of asparaginyl-tRNA or glutaminyl-tRNA synthetases. The reaction takes place in the presence of glutamine and ATP through an activated phospho-Asp-tRNA(Asn) or phospho-Glu-tRNA(Gln). This chain is Aspartyl/glutamyl-tRNA(Asn/Gln) amidotransferase subunit C, found in Acidithiobacillus ferrooxidans (strain ATCC 23270 / DSM 14882 / CIP 104768 / NCIMB 8455) (Ferrobacillus ferrooxidans (strain ATCC 23270)).